We begin with the raw amino-acid sequence, 374 residues long: Proteasomal ubiquitin receptor ADRM1 homolog (374 aa).

A Pru domain is found at 13–131 (SSSGHIVEFK…KKVTDALNKP (119 aa)). 3 disordered regions span residues 126-166 (DALN…MNAP), 187-223 (SDTL…NPLS), and 334-374 (ANLT…MDVD). 2 stretches are compositionally biased toward polar residues: residues 141-163 (SAGS…SSDM) and 209-223 (PSTN…NPLS). One can recognise a DEUBAD domain in the interval 239–346 (SQKKEVAVSL…TKAEGGEDAA (108 aa)). Over residues 354-368 (DATREPEPKRNRPDN) the composition is skewed to basic and acidic residues.

Belongs to the ADRM1 family. Component of the 19S proteasome regulatory particle complex. The 26S proteasome consists of a 20S core particle (CP) and two 19S regulatory subunits (RP). Interacts with deubiquitinase ubh-4.

It is found in the cytoplasm. Its subcellular location is the nucleus. Its function is as follows. May function as a proteasomal ubiquitin receptor. May promote the deubiquitinating activity associated with the 26S proteasome. This is Proteasomal ubiquitin receptor ADRM1 homolog from Caenorhabditis elegans.